We begin with the raw amino-acid sequence, 348 residues long: Thioredoxin-related protein DsbJ (348 aa).

Residues 1–32 (MILLQNIKRCSLKQLKVLATLLLSLSLPTLEA) form the signal peptide.

The protein localises to the periplasm. The sequence is that of Thioredoxin-related protein DsbJ (dsbJ) from Chlamydia pneumoniae (Chlamydophila pneumoniae).